We begin with the raw amino-acid sequence, 734 residues long: Photosystem I P700 chlorophyll a apoprotein A2 (734 aa).

The next 8 membrane-spanning stretches (helical) occupy residues 46–69, 135–158, 175–199, 273–291, 330–353, 369–395, 417–439, and 517–535; these read IFSS…FHVA, LYNG…LHLQ, LNHH…HVAI, MAHH…GHMY, LHMQ…QHMY, AALY…IFFI, AIIS…LYIH, and FLVH…LILV. Cysteine 559 and cysteine 568 together coordinate [4Fe-4S] cluster. Helical transmembrane passes span 575–596 and 643–665; these read AFYL…YWHW and LSVW…MFLI. Chlorophyll a contacts are provided by histidine 654, methionine 662, and tyrosine 670. Phylloquinone is bound at residue tryptophan 671. The helical transmembrane segment at 707 to 727 threads the bilayer; the sequence is LVGLVHFSVGYILTYAAFVIA.

The protein belongs to the PsaA/PsaB family. In terms of assembly, the PsaA/B heterodimer binds the P700 chlorophyll special pair and subsequent electron acceptors. PSI consists of a core antenna complex that captures photons, and an electron transfer chain that converts photonic excitation into a charge separation. The eukaryotic PSI reaction center is composed of at least 11 subunits. It depends on P700 is a chlorophyll a/chlorophyll a' dimer, A0 is one or more chlorophyll a, A1 is one or both phylloquinones and FX is a shared 4Fe-4S iron-sulfur center. as a cofactor.

It localises to the plastid. It is found in the chloroplast thylakoid membrane. It carries out the reaction reduced [plastocyanin] + hnu + oxidized [2Fe-2S]-[ferredoxin] = oxidized [plastocyanin] + reduced [2Fe-2S]-[ferredoxin]. PsaA and PsaB bind P700, the primary electron donor of photosystem I (PSI), as well as the electron acceptors A0, A1 and FX. PSI is a plastocyanin/cytochrome c6-ferredoxin oxidoreductase, converting photonic excitation into a charge separation, which transfers an electron from the donor P700 chlorophyll pair to the spectroscopically characterized acceptors A0, A1, FX, FA and FB in turn. Oxidized P700 is reduced on the lumenal side of the thylakoid membrane by plastocyanin or cytochrome c6. In Gracilaria tenuistipitata var. liui (Red alga), this protein is Photosystem I P700 chlorophyll a apoprotein A2.